A 194-amino-acid chain; its full sequence is Imidazoleglycerol-phosphate dehydratase (194 aa).

This sequence belongs to the imidazoleglycerol-phosphate dehydratase family.

The protein localises to the cytoplasm. It catalyses the reaction D-erythro-1-(imidazol-4-yl)glycerol 3-phosphate = 3-(imidazol-4-yl)-2-oxopropyl phosphate + H2O. It functions in the pathway amino-acid biosynthesis; L-histidine biosynthesis; L-histidine from 5-phospho-alpha-D-ribose 1-diphosphate: step 6/9. This Bacillus subtilis (strain 168) protein is Imidazoleglycerol-phosphate dehydratase.